A 119-amino-acid chain; its full sequence is MAPSQKKSRKSRNKSRSTLMISGLPILNSTDLEDRLLTSAIASQPLSQDWVRWIIDLWVSRVRSRNYLTQVARTLRAYPHWVTESMLSNHELTVWIRSRLISLDEHPLWRQMLEAYGQN.

This sequence belongs to the orthoreovirus sigma-1s protein family.

The protein is Protein sigma-1-small (S1) of Mammalia (T1L).